The following is a 145-amino-acid chain: Succinate dehydrogenase assembly factor 2, mitochondrial (145 aa).

It belongs to the SDHAF2 family. Interacts with the flavoprotein subunit within the SDH catalytic dimer.

Its subcellular location is the mitochondrion matrix. Plays an essential role in the assembly of succinate dehydrogenase (SDH), an enzyme complex (also referred to as respiratory complex II) that is a component of both the tricarboxylic acid (TCA) cycle and the mitochondrial electron transport chain, and which couples the oxidation of succinate to fumarate with the reduction of ubiquinone (coenzyme Q) to ubiquinol. Required for flavinylation (covalent attachment of FAD) of the flavoprotein subunit of the SDH catalytic dimer. The chain is Succinate dehydrogenase assembly factor 2, mitochondrial from Yarrowia lipolytica (strain CLIB 122 / E 150) (Yeast).